The chain runs to 1159 residues: PAN2-PAN3 deadenylation complex catalytic subunit pan2 (1159 aa).

The stretch at 276–315 (ANVSFMLGIDISPSGEALAINDAECMVHLWGSPAKIHFNE) is one WD repeat. Residues 316 to 451 (MSKEVELADV…GAKLNGEAED (136 aa)) are linker. Residues 452 to 821 (DPLLKYSNVE…VPCVLAFQVK (370 aa)) enclose the USP domain. An Exonuclease domain is found at 872-1048 (LDTEFVDLEK…IEDARMALRL (177 aa)). Positions 873, 875, 982, and 1041 each coordinate a divalent metal cation. Residues 1094–1159 (TAVTMQNTNS…GDFFGGSPLK (66 aa)) are disordered. A compositionally biased stretch (polar residues) spans 1096-1106 (VTMQNTNSGRN). The span at 1107–1128 (TPTVPDAAGAPAVPASAPTTPG) shows a compositional bias: low complexity. Residues 1143 to 1153 (TFSGPGAGDFF) are compositionally biased toward gly residues.

Belongs to the peptidase C19 family. PAN2 subfamily. As to quaternary structure, forms a heterotrimer with an asymmetric homodimer of the regulatory subunit pan3 to form the poly(A)-nuclease (PAN) deadenylation complex. It depends on a divalent metal cation as a cofactor.

The protein resides in the cytoplasm. It catalyses the reaction Exonucleolytic cleavage of poly(A) to 5'-AMP.. Its activity is regulated as follows. Positively regulated by the regulatory subunit pan3. In terms of biological role, catalytic subunit of the poly(A)-nuclease (PAN) deadenylation complex, one of two cytoplasmic mRNA deadenylases involved in mRNA turnover. PAN specifically shortens poly(A) tails of RNA and the activity is stimulated by poly(A)-binding protein pab1. PAN deadenylation is followed by rapid degradation of the shortened mRNA tails by the CCR4-NOT complex. Deadenylated mRNAs are then degraded by two alternative mechanisms, namely exosome-mediated 3'-5' exonucleolytic degradation, or deadenylation-dependent mRNA decaping and subsequent 5'-3' exonucleolytic degradation by xrn1. May also be involved in post-transcriptional maturation of mRNA poly(A) tails. The protein is PAN2-PAN3 deadenylation complex catalytic subunit pan2 of Aspergillus terreus (strain NIH 2624 / FGSC A1156).